Reading from the N-terminus, the 662-residue chain is PAN2-PAN3 deadenylation complex subunit PAN3 (662 aa).

Disordered regions lie at residues 1–29 (MASA…NAKD) and 53–133 (DPHK…DTVT). The C3H1-type zinc finger occupies 26 to 55 (NAKDTLCRNITIYGRCRYEDKGCAFNHDPH). A compositionally biased stretch (low complexity) spans 75–102 (SFTPSLLSSNGSSPTSTPATTKKMTTIS). The segment covering 115-133 (SVVSRSNASTPGLRQDTVT) has biased composition (polar residues). The interval 263 to 525 (QTLPNTQLPA…NIDVFITGIS (263 aa)) is pseudokinase domain. ATP-binding positions include arginine 315, 364–371 (DYHPLSKT), and 425–426 (SK). Positions 526-564 (SQLMSTFDSALHLDDQLTSDLSRELENGRLVRLMAKLNF) form a coiled coil. The tract at residues 565 to 662 (VNERPEYEHD…ALMKPARRMH (98 aa)) is knob domain.

The protein belongs to the protein kinase superfamily. PAN3 family. Homodimer. Forms a heterotrimer with a catalytic subunit pan2 to form the poly(A)-nuclease (PAN) deadenylation complex. Interacts (via PAM-2 motif) with poly(A)-binding protein pab1 (via PABC domain), conferring substrate specificity of the enzyme complex.

It is found in the cytoplasm. Its function is as follows. Regulatory subunit of the poly(A)-nuclease (PAN) deadenylation complex, one of two cytoplasmic mRNA deadenylases involved in mRNA turnover. PAN specifically shortens poly(A) tails of RNA and the activity is stimulated by poly(A)-binding protein pab1. PAN deadenylation is followed by rapid degradation of the shortened mRNA tails by the CCR4-NOT complex. Deadenylated mRNAs are then degraded by two alternative mechanisms, namely exosome-mediated 3'-5' exonucleolytic degradation, or deadenylation-dependent mRNA decaping and subsequent 5'-3' exonucleolytic degradation by xrn1. May also be involved in post-transcriptional maturation of mRNA poly(A) tails. pan3 acts as a positive regulator for PAN activity, recruiting the catalytic subunit pan2 to mRNA via its interaction with RNA and with pab1. In Aspergillus fumigatus (strain ATCC MYA-4609 / CBS 101355 / FGSC A1100 / Af293) (Neosartorya fumigata), this protein is PAN2-PAN3 deadenylation complex subunit PAN3.